We begin with the raw amino-acid sequence, 432 residues long: Adenylosuccinate synthetase (432 aa).

GTP contacts are provided by residues 11 to 17 (GDEGKGK) and 39 to 41 (GHT). Catalysis depends on Asp-12, which acts as the Proton acceptor. Residues Asp-12 and Gly-39 each contribute to the Mg(2+) site. IMP-binding positions include 12 to 15 (DEGK), 37 to 40 (NAGH), Thr-134, Arg-148, Asn-230, Thr-245, and Arg-309. The active-site Proton donor is His-40. Substrate is bound at residue 305–311 (VTTGRKR). GTP is bound by residues Arg-311, 337 to 339 (KLD), and 419 to 421 (GTG).

The protein belongs to the adenylosuccinate synthetase family. As to quaternary structure, homodimer. It depends on Mg(2+) as a cofactor.

Its subcellular location is the cytoplasm. It carries out the reaction IMP + L-aspartate + GTP = N(6)-(1,2-dicarboxyethyl)-AMP + GDP + phosphate + 2 H(+). The protein operates within purine metabolism; AMP biosynthesis via de novo pathway; AMP from IMP: step 1/2. Functionally, plays an important role in the de novo pathway and in the salvage pathway of purine nucleotide biosynthesis. Catalyzes the first committed step in the biosynthesis of AMP from IMP. The sequence is that of Adenylosuccinate synthetase from Vanderwaltozyma polyspora (strain ATCC 22028 / DSM 70294 / BCRC 21397 / CBS 2163 / NBRC 10782 / NRRL Y-8283 / UCD 57-17) (Kluyveromyces polysporus).